Here is a 246-residue protein sequence, read N- to C-terminus: 2,5-diamino-6-ribosylamino-4(3H)-pyrimidinone 5'-phosphate reductase (246 aa).

NADP(+) contacts are provided by residues Thr-78, Asp-82, Leu-163, and 186 to 190 (GAEVL).

It belongs to the HTP reductase family. Homodimer.

The catalysed reaction is 2,5-diamino-6-(1-D-ribitylamino)pyrimidin-4(3H)-one 5'-phosphate + NADP(+) = 2,5-diamino-6-(1-D-ribosylamino)pyrimidin-4(3H)-one 5'-phosphate + NADPH + H(+). It carries out the reaction 2,5-diamino-6-(1-D-ribitylamino)pyrimidin-4(3H)-one 5'-phosphate + NAD(+) = 2,5-diamino-6-(1-D-ribosylamino)pyrimidin-4(3H)-one 5'-phosphate + NADH + H(+). Its pathway is cofactor biosynthesis; riboflavin biosynthesis. Its function is as follows. Catalyzes an early step in riboflavin biosynthesis, the NADPH-dependent reduction of the ribose side chain of 2,5-diamino-6-ribosylamino-4(3H)-pyrimidinone 5'-phosphate, yielding 2,5-diamino-6-ribitylamino-4(3H)-pyrimidinone 5'-phosphate. This is 2,5-diamino-6-ribosylamino-4(3H)-pyrimidinone 5'-phosphate reductase (RIB7) from Eremothecium gossypii (strain ATCC 10895 / CBS 109.51 / FGSC 9923 / NRRL Y-1056) (Yeast).